Consider the following 596-residue polypeptide: Alpha-1,3-galactosidase A (596 aa).

The N-terminal stretch at 1–21 (MQNPVASLLFILAMLTGPCPA) is a signal peptide. Positions 23 to 57 (DYPERTERTQSAGNHVWHIDPDKGNDGNPGTAPST) are disordered. 4 PbH1 repeats span residues 351-373 (RGKI…NVHG), 482-504 (RKPV…LVED), 515-537 (VRNM…QIVP), and 547-569 (HRNI…RIRH).

It belongs to the glycosyl hydrolase 110 family. A subfamily.

The catalysed reaction is Hydrolysis of terminal, non-reducing branched (1-&gt;3)-alpha-D-galactosidic residues, producing free D-galactose.. It catalyses the reaction Hydrolysis of terminal, non-reducing alpha-D-galactose residues in alpha-D-galactosides, including galactose oligosaccharides, galactomannans and galactolipids.. Alpha-galactosidase that specifically removes branched alpha-1,3-linked galactose residues present in blood group B antigens. Has no activity toward linear alpha-1,3-linked galactose residues. The polypeptide is Alpha-1,3-galactosidase A (glaA) (Akkermansia muciniphila (strain ATCC BAA-835 / DSM 22959 / JCM 33894 / BCRC 81048 / CCUG 64013 / CIP 107961 / Muc)).